The sequence spans 514 residues: Butyrophilin subfamily 2 member A2 (514 aa).

Positions 1–29 (MEPTTSLRSCPIASLLFFLVLSLFVLVSA) are cleaved as a signal peptide. Positions 30–142 (QFTVIGPAEP…SYDQATMKLM (113 aa)) constitute an Ig-like V-type domain. Residues 30–244 (QFTVIGPAEP…ILIPESFVPS (215 aa)) are Extracellular-facing. N-linked (GlcNAc...) asparagine glycans are attached at residues Asn47 and Asn115. Cystine bridges form between Cys52-Cys126 and Cys166-Cys220. The Ig-like C2-type domain occupies 150–232 (PLIKMKTLED…NNTLLSQEVE (83 aa)). Residues 245 to 265 (LPLWMVAVAVTLPVVMLILLT) traverse the membrane as a helical segment. Residues 266–514 (SGSICLVKKH…PISQSLVRKP (249 aa)) lie on the Cytoplasmic side of the membrane. The stretch at 281–304 (ILSAEKEAEYEEKEAARQLQEELR) forms a coiled coil. Residues 295–488 (AARQLQEELR…LFICPAFTGA (194 aa)) enclose the B30.2/SPRY domain.

This sequence belongs to the immunoglobulin superfamily. BTN/MOG family. Post-translationally, N-glycosylated. Widely expressed (at protein level). In the thymus, restricted to the corticomedullary junction, but not confined solely to epithelial cells (at protein level). Significant expression on naive B-cells, splenic natural killer cells, dendritic cells and peritoneal macrophages (at protein level). Negligible expression on naive T-cells up-regulated on activated T-cells (at protein level).

It localises to the membrane. Inhibits the proliferation of CD4 and CD8 T-cells activated by anti-CD3 antibodies, T-cell metabolism and IL2 and IFNG secretion. This chain is Butyrophilin subfamily 2 member A2 (Btn2a2), found in Mus musculus (Mouse).